The primary structure comprises 150 residues: Ribosome-binding factor A (150 aa).

The disordered stretch occupies residues 126 to 150 (EVARDLSHDDDEDGGADEAPRNGDE).

It belongs to the RbfA family. In terms of assembly, monomer. Binds 30S ribosomal subunits, but not 50S ribosomal subunits or 70S ribosomes.

The protein resides in the cytoplasm. One of several proteins that assist in the late maturation steps of the functional core of the 30S ribosomal subunit. Associates with free 30S ribosomal subunits (but not with 30S subunits that are part of 70S ribosomes or polysomes). Required for efficient processing of 16S rRNA. May interact with the 5'-terminal helix region of 16S rRNA. This chain is Ribosome-binding factor A, found in Brucella abortus (strain S19).